A 534-amino-acid polypeptide reads, in one-letter code: Ulvan lyase NLR42 (534 aa).

The N-terminal stretch at 1 to 47 (MVFFKDLFIFKSLIKGSLYSGHMKKKLLNYLPLFALMLFTVSMMAQT) is a signal peptide. A disulfide bond links Cys-59 and Cys-89. 6 residues coordinate Ca(2+): Gly-63, Asn-68, Asp-86, Thr-88, Ala-91, and Asp-92. Tyr-164 provides a ligand contact to substrate. The Proton acceptor role is filled by Lys-169. Substrate is bound by residues 218–223 (SGAAGR) and 288–291 (YRVK). Tyr-288 acts as the Proton donor/acceptor in catalysis. The tract at residues 316 to 449 (PAADIYRIKN…SKWNLESTTL (134 aa)) is ulvan-binding domain. The propeptide at 450–534 (SVDSQQIASV…KVYQTKLIVN (85 aa)) is removed by the type IX secretion system (T9SS).

Belongs to the polysaccharide lyase 28 family. Ca(2+) is required as a cofactor.

The protein localises to the secreted. Its function is as follows. Ulvan lyase involved in ulvan degradation. Ulvan is the main polysaccharide component of the Ulvales (green seaweed) cell wall. It is composed of disaccharide building blocks comprising 3-sulfated rhamnose (Rha3S) linked to D-glucuronic acid (GlcA), L-iduronic acid (IduA), or D-xylose (Xyl). Ulvan lyase catalyzes the endolytic cleavage of the glycosidic bond between Rha3S and the uronic acids GlcA or IduA, producing oligosaccharides that have unsaturated 4-deoxy-L-threo-hex-4-enopyranosiduronic acid (deltaUA) at the non-reducing end. This results eventually in the degradation of the ulvan polysaccharide into deltaUA-Rha3S disaccharides and deltaUA-Rha3S-Xyl-Rha3S tetrasaccharides. The polypeptide is Ulvan lyase NLR42 (Nonlabens ulvanivorans (Persicivirga ulvanivorans)).